Reading from the N-terminus, the 206-residue chain is Large ribosomal subunit protein uL4 (206 aa).

The segment at 49-76 (QSAKTRTEVRGGGIKPWRQKGTGRARQG) is disordered.

Belongs to the universal ribosomal protein uL4 family. Part of the 50S ribosomal subunit.

One of the primary rRNA binding proteins, this protein initially binds near the 5'-end of the 23S rRNA. It is important during the early stages of 50S assembly. It makes multiple contacts with different domains of the 23S rRNA in the assembled 50S subunit and ribosome. In terms of biological role, forms part of the polypeptide exit tunnel. This Clostridium botulinum (strain Alaska E43 / Type E3) protein is Large ribosomal subunit protein uL4.